The sequence spans 249 residues: Ubiquinone/menaquinone biosynthesis C-methyltransferase UbiE (249 aa).

S-adenosyl-L-methionine is bound by residues T72, D93, and 121 to 122 (DA).

It belongs to the class I-like SAM-binding methyltransferase superfamily. MenG/UbiE family.

It carries out the reaction a 2-demethylmenaquinol + S-adenosyl-L-methionine = a menaquinol + S-adenosyl-L-homocysteine + H(+). The catalysed reaction is a 2-methoxy-6-(all-trans-polyprenyl)benzene-1,4-diol + S-adenosyl-L-methionine = a 5-methoxy-2-methyl-3-(all-trans-polyprenyl)benzene-1,4-diol + S-adenosyl-L-homocysteine + H(+). The protein operates within quinol/quinone metabolism; menaquinone biosynthesis; menaquinol from 1,4-dihydroxy-2-naphthoate: step 2/2. It participates in cofactor biosynthesis; ubiquinone biosynthesis. Its function is as follows. Methyltransferase required for the conversion of demethylmenaquinol (DMKH2) to menaquinol (MKH2) and the conversion of 2-polyprenyl-6-methoxy-1,4-benzoquinol (DDMQH2) to 2-polyprenyl-3-methyl-6-methoxy-1,4-benzoquinol (DMQH2). The sequence is that of Ubiquinone/menaquinone biosynthesis C-methyltransferase UbiE from Teredinibacter turnerae (strain ATCC 39867 / T7901).